The following is a 385-amino-acid chain: WD repeat-containing protein 74 (385 aa).

WD repeat units follow at residues 40–80, 83–122, 128–168, 179–220, 224–266, and 267–306; these read RREE…FQGQ, CPGG…TSSD, RVGP…EPVF, DLRV…RRPV, TYGE…GCLK, and GLAG…GLEH. S214 is modified (phosphoserine). The residue at position 311 (K311) is an N6-methyllysine. Positions 320-385 are required for nucleolar and nuclear location; that stretch reads SGRDNWEDEP…KKKRPGSTSP (66 aa). Disordered regions lie at residues 323–345 and 360–385; these read DNWE…DTET and LSGL…STSP. A Phosphoserine modification is found at S361. Basic residues predominate over residues 372–385; the sequence is TRRRKKKRPGSTSP.

In terms of assembly, isoform 1 interacts (through WDR repeats) with NVL; the interaction is independent of RNA or pre-60S ribosome particles. Isoform 2 does not interact with NVL. Interacts with MTREX; the interaction dissociation in a late stage of rRNA synthesis is required for appropriate maturation of pre-60S particles and depends on the ATPase activity of NVL.

It localises to the nucleus. It is found in the nucleolus. Regulatory protein of the MTREX-exosome complex involved in the synthesis of the 60S ribosomal subunit. Participates in an early cleavage of the pre-rRNA processing pathway in cooperation with NVL. Required for blastocyst formation, is necessary for RNA transcription, processing and/or stability during preimplantation development. The polypeptide is WD repeat-containing protein 74 (WDR74) (Homo sapiens (Human)).